Reading from the N-terminus, the 795-residue chain is ATP-dependent RNA helicase DHX15 (795 aa).

A disordered region spans residues methionine 1–histidine 108. A Phosphoserine modification is found at serine 15. The segment covering alanine 20–arginine 62 has biased composition (basic and acidic residues). Residues alanine 79–histidine 108 are compositionally biased toward low complexity. One can recognise a Helicase ATP-binding domain in the interval threonine 147–proline 313. Glycine 160–threonine 167 contacts ATP. The short motif at aspartate 260 to histidine 263 is the DEAH box element. The Helicase C-terminal domain maps to threonine 338–glycine 518. Lysine 488 carries the N6-acetyllysine modification. Lysine 786 participates in a covalent cross-link: Glycyl lysine isopeptide (Lys-Gly) (interchain with G-Cter in SUMO2).

The protein belongs to the DEAD box helicase family. DEAH subfamily. DDX15/PRP43 sub-subfamily. Component of the U11/U12 snRNPs that are part of the U12-type spliceosome. Identified in the Intron Large spliceosome complex (IL, also named intron lariat spliceosome), a post-mRNA release spliceosomal complex containing the excised intron, U2, U5 and U6 snRNPs, and splicing factors; the association may be transient. The IL complex exists in two distinct conformations, one with the DHX15 (ILS2) and one without (ILS1). Interacts with TFIP11 (via G-patch domain); indicative for a recruitment to the IL complex. Interacts with SSB/La. Interacts with GPATCH2 (via G-patch domain); promoting the RNA helicase activity. Interacts with NKRF (via G-patch domain); promoting the RNA helicase activity. Interacts with NLRP6.

The protein resides in the nucleus. Its subcellular location is the nucleolus. The enzyme catalyses ATP + H2O = ADP + phosphate + H(+). With respect to regulation, ATPase activity is enhanced upon binding to G-patch domain-containing proteins. G-patch domain-containing proteins act like a brace that tethers mobile sections of DHX15 together, stabilizing a functional conformation with high RNA affinity, thereby promoting the ATPase activity. Its function is as follows. RNA helicase involved in mRNA processing and antiviral innate immunity. Pre-mRNA processing factor involved in disassembly of spliceosomes after the release of mature mRNA. In cooperation with TFIP11 seem to be involved in the transition of the U2, U5 and U6 snRNP-containing IL complex to the snRNP-free IS complex leading to efficient debranching and turnover of excised introns. Plays a key role in antiviral innate immunity by promoting both MAVS-dependent signaling and NLRP6 inflammasome. Acts as an RNA virus sensor: recognizes and binds viral double stranded RNA (dsRNA) and activates the MAVS-dependent signaling to produce interferon-beta and interferon lambda-3 (IFNL3). Involved in intestinal antiviral innate immunity together with NLRP6: recognizes and binds viral dsRNA and promotes activation of the NLRP6 inflammasome in intestinal epithelial cells to restrict infection by enteric viruses. The NLRP6 inflammasome acts by promoting maturation and secretion of IL18 in the extracellular milieu. Also involved in antibacterial innate immunity by promoting Wnt-induced antimicrobial protein expression in Paneth cells. The chain is ATP-dependent RNA helicase DHX15 from Pongo abelii (Sumatran orangutan).